Reading from the N-terminus, the 436-residue chain is Phosphoribosylamine--glycine ligase (436 aa).

The region spanning 106–318 (RKLFEDYRIP…MLEICEGIVD (213 aa)) is the ATP-grasp domain. 133 to 196 (MEDFDSEAVV…EERVVGEEFT (64 aa)) lines the ATP pocket. Gln276, Glu288, and Asn290 together coordinate Mg(2+). Residues Gln276, Glu288, and Asn290 each contribute to the Mn(2+) site.

The protein belongs to the GARS family. The cofactor is Mg(2+). Mn(2+) is required as a cofactor.

It catalyses the reaction 5-phospho-beta-D-ribosylamine + glycine + ATP = N(1)-(5-phospho-beta-D-ribosyl)glycinamide + ADP + phosphate + H(+). It participates in purine metabolism; IMP biosynthesis via de novo pathway; N(1)-(5-phospho-D-ribosyl)glycinamide from 5-phospho-alpha-D-ribose 1-diphosphate: step 2/2. In Methanothermobacter thermautotrophicus (strain ATCC 29096 / DSM 1053 / JCM 10044 / NBRC 100330 / Delta H) (Methanobacterium thermoautotrophicum), this protein is Phosphoribosylamine--glycine ligase.